A 230-amino-acid chain; its full sequence is uncharacterized protein (230 aa).

This is an uncharacterized protein from Encephalitozoon cuniculi (strain GB-M1) (Microsporidian parasite).